Here is a 716-residue protein sequence, read N- to C-terminus: ATP-dependent DNA helicase DinG (716 aa).

In terms of domain architecture, Helicase ATP-binding spans alanine 17–threonine 294. Alanine 54 to threonine 61 contributes to the ATP binding site. Cysteine 120 contacts [4Fe-4S] cluster. A DEAH box motif is present at residues glutamate 131–glutamine 134. Residues cysteine 194, cysteine 199, and cysteine 205 each coordinate [4Fe-4S] cluster. The DEAH box signature appears at aspartate 248–histidine 251. Residues alanine 487 to proline 698 form the Helicase C-terminal domain.

The protein belongs to the helicase family. DinG subfamily. Type 1 sub-subfamily. Requires [4Fe-4S] cluster as cofactor.

The enzyme catalyses Couples ATP hydrolysis with the unwinding of duplex DNA at the replication fork by translocating in the 5'-3' direction. This creates two antiparallel DNA single strands (ssDNA). The leading ssDNA polymer is the template for DNA polymerase III holoenzyme which synthesizes a continuous strand.. It catalyses the reaction ATP + H2O = ADP + phosphate + H(+). Functionally, DNA-dependent ATPase and 5'-3' DNA helicase. Unwinds D-loops, R-loops, forked DNA and G-quadruplex DNA. This is ATP-dependent DNA helicase DinG from Shigella flexneri.